The following is a 32-amino-acid chain: Islet amyloid polypeptide (32 aa).

It belongs to the calcitonin family. As to quaternary structure, can form homodimers. Interacts with IDE and INS. Interaction with INS inhibits homodimerization and fibril formation.

The protein localises to the secreted. Amylin/IAPP is a glucoregulatory peptide hormone that plays an important role in the regulation of energy homeostasis. Selectively inhibits insulin-stimulated glucose utilization and glycogen deposition in muscle, while not affecting adipocyte glucose metabolism. IAPP function is mediated by the CALCR-RAMPs (AMYRs) receptor complexes. Amylin can also bind CALCR receptor in the absence of RAMPs, although it is more selective for AMYRs. The protein is Islet amyloid polypeptide (IAPP) of Ovis aries (Sheep).